Consider the following 534-residue polypeptide: Protein BFR2 (534 aa).

The disordered stretch occupies residues 27-148; it reads ENASLFQHNE…ETEEAQQKRH (122 aa). Residues serine 41 and serine 44 each carry the phosphoserine modification. The span at 52–77 shows a compositional bias: basic and acidic residues; the sequence is EETKKAHYLEVEKSKLRAEKGLELND. The stretch at 86 to 161 forms a coiled coil; sequence SRQALYEEVS…KLIQQETKQA (76 aa). Composition is skewed to acidic residues over residues 93-114 and 121-142; these read EVSE…EEDA and SEDE…ETEE. Serine 366, serine 372, and serine 379 each carry phosphoserine.

This sequence belongs to the AATF family.

It is found in the nucleus. Its subcellular location is the nucleolus. Its function is as follows. Involved in endoplasmic reticulum to Golgi transport. Involved in a protein-transport step blocked by brefeldin A, which disrupts the Golgi apparatus and its incoming protein flux. May also be involved for mass growth or cell proliferation. The sequence is that of Protein BFR2 (BFR2) from Saccharomyces cerevisiae (strain ATCC 204508 / S288c) (Baker's yeast).